The sequence spans 185 residues: MRLLILTCLVAVALARPKLPLRYPERLQNPSESSEPIPLESREEYMNGMNRQRNILREKQTDEIKDTRNESTQNCVVAEPEKMESSISSSSEEMSLSKCAEQFCRLNEYNQLQLQAAHAQEQIRRMNENSHVQVPFQQLNQLAAYPYAVWYYPQIMQYVPFPPFSDISNPTAHENYEKNNVMLQW.

An N-terminal signal peptide occupies residues Met1–Ala15. 10 positions are modified to phosphoserine: Ser31, Ser33, Ser41, Ser71, Ser85, Ser86, Ser88, Ser89, Ser90, and Ser91.

Belongs to the alpha-casein family. Heteromultimers of alpha-s1 casein and kappa-casein; disulfide-linked. Not glycosylated. Mammary gland specific. Secreted in milk.

The protein resides in the secreted. In terms of biological role, important role in the capacity of milk to transport calcium phosphate. Casoxin D acts as opioid antagonist and has vasorelaxing activity mediated by bradykinin B1 receptors. The chain is Alpha-S1-casein (CSN1S1) from Homo sapiens (Human).